A 515-amino-acid chain; its full sequence is Bifunctional purine biosynthesis protein PurH (515 aa).

Residues 1-145 form the MGS-like domain; it reads MTKRVLISVS…KNHASVTVVV (145 aa).

It belongs to the PurH family.

It catalyses the reaction (6R)-10-formyltetrahydrofolate + 5-amino-1-(5-phospho-beta-D-ribosyl)imidazole-4-carboxamide = 5-formamido-1-(5-phospho-D-ribosyl)imidazole-4-carboxamide + (6S)-5,6,7,8-tetrahydrofolate. The enzyme catalyses IMP + H2O = 5-formamido-1-(5-phospho-D-ribosyl)imidazole-4-carboxamide. It participates in purine metabolism; IMP biosynthesis via de novo pathway; 5-formamido-1-(5-phospho-D-ribosyl)imidazole-4-carboxamide from 5-amino-1-(5-phospho-D-ribosyl)imidazole-4-carboxamide (10-formyl THF route): step 1/1. It functions in the pathway purine metabolism; IMP biosynthesis via de novo pathway; IMP from 5-formamido-1-(5-phospho-D-ribosyl)imidazole-4-carboxamide: step 1/1. The sequence is that of Bifunctional purine biosynthesis protein PurH from Streptococcus pneumoniae (strain JJA).